Consider the following 243-residue polypeptide: ADP-ribosylation factor-like protein 10 (243 aa).

Residues 83–90 (GLDGSGKS), 127–131 (EIGGS), and 184–187 (NKQD) contribute to the GTP site.

Belongs to the small GTPase superfamily. Arf family.

This is ADP-ribosylation factor-like protein 10 (Arl10) from Mus musculus (Mouse).